Here is a 211-residue protein sequence, read N- to C-terminus: Large ribosomal subunit protein uL4 (211 aa).

Positions 42–87 are disordered; it reads AHMRQGTASTLTRSEVRGGGRKPYKQKGTGRARQGSVRTPLRPGGG. The segment covering 60-71 has biased composition (basic residues); the sequence is GGRKPYKQKGTG.

This sequence belongs to the universal ribosomal protein uL4 family. As to quaternary structure, part of the 50S ribosomal subunit.

Its function is as follows. One of the primary rRNA binding proteins, this protein initially binds near the 5'-end of the 23S rRNA. It is important during the early stages of 50S assembly. It makes multiple contacts with different domains of the 23S rRNA in the assembled 50S subunit and ribosome. In terms of biological role, forms part of the polypeptide exit tunnel. The chain is Large ribosomal subunit protein uL4 from Synechococcus sp. (strain CC9902).